Consider the following 120-residue polypeptide: Protein TCL1B4 (120 aa).

The protein belongs to the TCL1 family.

This is Protein TCL1B4 (Tcl1b4) from Mus musculus (Mouse).